An 85-amino-acid polypeptide reads, in one-letter code: MSNNIEHTMQFDLSKNKEALTKTILTEVYNSLQEKGYNPINQLVGYLISGDPTYITNYNGARALVRKLERDDILEEVIKSYLEIK.

It belongs to the UPF0297 family.

The protein is UPF0297 protein Cbei_1105 of Clostridium beijerinckii (strain ATCC 51743 / NCIMB 8052) (Clostridium acetobutylicum).